The sequence spans 71 residues: Immune-induced peptide 18 (71 aa).

Positions 1 to 24 (MKLIALCCLLLLGLLGFLAAPGVA) are cleaved as a signal peptide. The propeptide occupies 25–26 (SP). Residues 26–71 (PSRHTGPGNGSGSGAGSGNPFRSPSSQQRPLYYDAPIGKPSKTMYA) form a disordered region. Residues 32-42 (PGNGSGSGAGS) are compositionally biased toward gly residues.

Hemolymph (at protein level).

Its subcellular location is the secreted. This chain is Immune-induced peptide 18 (IM18), found in Drosophila melanogaster (Fruit fly).